Reading from the N-terminus, the 116-residue chain is Large ribosomal subunit protein bL17 (116 aa).

It belongs to the bacterial ribosomal protein bL17 family. Part of the 50S ribosomal subunit. Contacts protein L32.

The polypeptide is Large ribosomal subunit protein bL17 (Sulfurimonas denitrificans (strain ATCC 33889 / DSM 1251) (Thiomicrospira denitrificans (strain ATCC 33889 / DSM 1251))).